A 342-amino-acid polypeptide reads, in one-letter code: Protein RecA (342 aa).

The protein belongs to the RecA family.

Its subcellular location is the cytoplasm. In terms of biological role, can catalyze the hydrolysis of ATP in the presence of single-stranded DNA, the ATP-dependent uptake of single-stranded DNA by duplex DNA, and the ATP-dependent hybridization of homologous single-stranded DNAs. It interacts with LexA causing its activation and leading to its autocatalytic cleavage. This Pectobacterium carotovorum (Erwinia carotovora) protein is Protein RecA.